The primary structure comprises 163 residues: Protein-export protein SecB (163 aa).

It belongs to the SecB family. Homotetramer, a dimer of dimers. One homotetramer interacts with 1 SecA dimer.

The protein resides in the cytoplasm. In terms of biological role, one of the proteins required for the normal export of preproteins out of the cell cytoplasm. It is a molecular chaperone that binds to a subset of precursor proteins, maintaining them in a translocation-competent state. It also specifically binds to its receptor SecA. The polypeptide is Protein-export protein SecB (Methylibium petroleiphilum (strain ATCC BAA-1232 / LMG 22953 / PM1)).